The chain runs to 512 residues: MAISPTATELLLASFAFCLVFWVVRAWQPRVPKGLKSPPGPWGWPLLGHVLTLGKNPHLVLARLSQRYGDVLQIRIGSTPVLVLSGLDTIRQALVQQGDDFKGRPNLYSFSLVTDGHSMSFSPDSGPVWAARRRLAQSALNTFSIASDPASSSSCYLEDHVSKEAEALLSRLQEQMAEVGSFDPHSQVVLSVANVIGAMCFGQHFPQDSEEKLSLIHSSNIFVENAYSGNPVDFFPILQYIPTPGLQRFKAFNQKLVQFLQKIIQEHYQDFDENNIQDITGALLKHCKKGSRANGGRIPHEKIVSLINDIFGAGFDTVTTAISWSLMYLVTNPEKQRKIQEELDTVVGRARRPRLSDRLQLPYLEASILEIFRHSSFIPFTVPHSTTRDTTLNGFYIPEKHLVFINQWQVNHDQKVWGDPFEFRPERFLTADGTAINKILSEKVMIFGLGKRRCIGEVLAKWEVFLFLAILLQQLEFSVPAGVKVDLTPIYGLTMRHVRCEHVQARPRFSIK.

A glycan (O-linked (GlcNAc) serine) is linked at serine 65. Phenylalanine 222 is a substrate binding site. Cysteine 454 is a binding site for heme.

The protein belongs to the cytochrome P450 family. Interacts with PGRMC1; the interaction requires PGRMC1 homodimerization. Heme is required as a cofactor.

The protein resides in the endoplasmic reticulum membrane. It localises to the microsome membrane. The catalysed reaction is an organic molecule + reduced [NADPH--hemoprotein reductase] + O2 = an alcohol + oxidized [NADPH--hemoprotein reductase] + H2O + H(+). It carries out the reaction 17beta-estradiol + reduced [NADPH--hemoprotein reductase] + O2 = 2-hydroxy-17beta-estradiol + oxidized [NADPH--hemoprotein reductase] + H2O + H(+). It catalyses the reaction 17beta-estradiol + reduced [NADPH--hemoprotein reductase] + O2 = 4-hydroxy-17beta-estradiol + oxidized [NADPH--hemoprotein reductase] + H2O + H(+). The enzyme catalyses estrone + reduced [NADPH--hemoprotein reductase] + O2 = 2-hydroxyestrone + oxidized [NADPH--hemoprotein reductase] + H2O + H(+). The catalysed reaction is estrone + reduced [NADPH--hemoprotein reductase] + O2 = 4-hydroxyestrone + oxidized [NADPH--hemoprotein reductase] + H2O + H(+). It carries out the reaction cholesterol + reduced [NADPH--hemoprotein reductase] + O2 = 25-hydroxycholesterol + oxidized [NADPH--hemoprotein reductase] + H2O + H(+). It catalyses the reaction all-trans-retinol + reduced [NADPH--hemoprotein reductase] + O2 = all-trans-retinal + oxidized [NADPH--hemoprotein reductase] + 2 H2O + H(+). The enzyme catalyses all-trans-retinal + reduced [NADPH--hemoprotein reductase] + O2 = all-trans-retinoate + oxidized [NADPH--hemoprotein reductase] + H2O + 2 H(+). The catalysed reaction is (5Z,8Z,11Z,14Z)-eicosatetraenoate + reduced [NADPH--hemoprotein reductase] + O2 = (14R,15S)-epoxy-(5Z,8Z,11Z)-eicosatrienoate + oxidized [NADPH--hemoprotein reductase] + H2O + H(+). It carries out the reaction (5Z,8Z,11Z,14Z)-eicosatetraenoate + reduced [NADPH--hemoprotein reductase] + O2 = (14S,15R)-epoxy-(5Z,8Z,11Z)-eicosatrienoate + oxidized [NADPH--hemoprotein reductase] + H2O + H(+). It catalyses the reaction (5Z,8Z,11Z,14Z,17Z)-eicosapentaenoate + reduced [NADPH--hemoprotein reductase] + O2 = (17R,18S)-epoxy-(5Z,8Z,11Z,14Z)-eicosatetraenoate + oxidized [NADPH--hemoprotein reductase] + H2O + H(+). The enzyme catalyses (4Z,7Z,10Z,13Z,16Z,19Z)-docosahexaenoate + reduced [NADPH--hemoprotein reductase] + O2 = (19R,20S)-epoxy-(4Z,7Z,10Z,13Z,16Z)-docosapentaenoate + oxidized [NADPH--hemoprotein reductase] + H2O + H(+). The catalysed reaction is (5S)-hydroperoxy-(6E,8Z,11Z,14Z)-eicosatetraenoate = 5-oxo-(6E,8Z,11Z,14Z)-eicosatetraenoate + H2O. It carries out the reaction (12S)-hydroperoxy-(5Z,8Z,10E,14Z)-eicosatetraenoate = 12-oxo-(5Z,8Z,10E,14Z)-eicosatetraenoate + H2O. It catalyses the reaction (15S)-hydroperoxy-(5Z,8Z,11Z,13E)-eicosatetraenoate = 15-oxo-(5Z,8Z,11Z,13E)-eicosatetraenoate + H2O. The enzyme catalyses (13S)-hydroperoxy-(9Z,11E)-octadecadienoate = 13-oxo-(9Z,11E)-octadecadienoate + H2O. The catalysed reaction is (5Z,8Z,11Z,14Z)-eicosatetraenoate + reduced [NADPH--hemoprotein reductase] + O2 = 13-hydroxy-(5Z,8Z,11Z,14Z)-eicosatetraenoate + oxidized [NADPH--hemoprotein reductase] + H2O + H(+). It carries out the reaction (5Z,8Z,11Z,14Z)-eicosatetraenoate + reduced [NADPH--hemoprotein reductase] + O2 = 19-hydroxy-(5Z,8Z,11Z,14Z)-eicosatetraenoate + oxidized [NADPH--hemoprotein reductase] + H2O + H(+). It catalyses the reaction (9Z,12Z)-octadecadienoate + reduced [NADPH--hemoprotein reductase] + O2 = 11-hydroxy-(9Z,12Z)-octadecadienoate + oxidized [NADPH--hemoprotein reductase] + H2O + H(+). The protein operates within cofactor metabolism; retinol metabolism. It functions in the pathway steroid metabolism; cholesterol metabolism. Its pathway is lipid metabolism; arachidonate metabolism. Its function is as follows. A cytochrome P450 monooxygenase involved in the metabolism of various endogenous substrates, including fatty acids, steroid hormones and vitamins. Mechanistically, uses molecular oxygen inserting one oxygen atom into a substrate, and reducing the second into a water molecule, with two electrons provided by NADPH via cytochrome P450 reductase (NADPH--hemoprotein reductase). Catalyzes the hydroxylation of carbon-hydrogen bonds. Exhibits high catalytic activity for the formation of hydroxyestrogens from estrone (E1) and 17beta-estradiol (E2), namely 2-hydroxy E1 and E2. Metabolizes cholesterol toward 25-hydroxycholesterol, a physiological regulator of cellular cholesterol homeostasis. May act as a major enzyme for all-trans retinoic acid biosynthesis in the liver. Catalyzes two successive oxidative transformation of all-trans retinol to all-trans retinal and then to the active form all-trans retinoic acid. Primarily catalyzes stereoselective epoxidation of the last double bond of polyunsaturated fatty acids (PUFA), displaying a strong preference for the (R,S) stereoisomer. Catalyzes bisallylic hydroxylation and omega-1 hydroxylation of PUFA. May also participate in eicosanoids metabolism by converting hydroperoxide species into oxo metabolites (lipoxygenase-like reaction, NADPH-independent). Plays a role in the oxidative metabolism of xenobiotics. Catalyzes the N-hydroxylation of heterocyclic amines and the O-deethylation of phenacetin. Metabolizes caffeine via N3-demethylation. This is Cytochrome P450 1A2 (CYP1A2) from Felis catus (Cat).